We begin with the raw amino-acid sequence, 838 residues long: Pentatricopeptide repeat-containing protein At4g19440, chloroplastic (838 aa).

The transit peptide at 1–32 (MAALLYFPKISSQMTSSHFISFSPMDLRRLSR) directs the protein to the chloroplast. PPR repeat units follow at residues 238-268 (SKTT…VCKG), 272-306 (DVYL…GVAP), 307-341 (NVVT…GMEP), 342-376 (TLIT…GFPP), 377-411 (NVIV…GLSL), 412-446 (TSST…GFNV), 447-481 (NQGS…NMSP), 482-516 (GGGL…GFVV), 517-551 (DTRT…GCVM), 552-586 (DRVS…GLKP), 587-621 (DNYT…GMLP), 622-656 (DVYT…NVQP), 657-691 (NTVV…GISP), 692-726 (NSAT…GLEP), 727-761 (NVFH…NVHP), and 762-796 (NKIT…GIVP).

Belongs to the PPR family. P subfamily.

Its subcellular location is the plastid. It localises to the chloroplast. In Arabidopsis thaliana (Mouse-ear cress), this protein is Pentatricopeptide repeat-containing protein At4g19440, chloroplastic.